A 128-amino-acid polypeptide reads, in one-letter code: MEVIHKIGRRKTAVARVYVSEGKGNITVNKKDLKDYFTTGTLLYKVNQPMMLTENEGNFDVKINVYGGGITGQAEAIRLALSRAMVALDEENHGALKPEGLLTRDPRMVERKKYGQKKARKKFQFSKR.

Belongs to the universal ribosomal protein uS9 family.

This is Small ribosomal subunit protein uS9 from Christiangramia forsetii (strain DSM 17595 / CGMCC 1.15422 / KT0803) (Gramella forsetii).